The following is a 191-amino-acid chain: Thymidylate kinase (191 aa).

Glycine 7–serine 14 contacts ATP.

Belongs to the thymidylate kinase family.

It carries out the reaction dTMP + ATP = dTDP + ADP. In terms of biological role, phosphorylation of dTMP to form dTDP in both de novo and salvage pathways of dTTP synthesis. The polypeptide is Thymidylate kinase (Sulfurovum sp. (strain NBC37-1)).